The sequence spans 330 residues: Type II methyltransferase M.MthTI (330 aa).

Residues 3-328 (MDIASFFSGA…KKIKKDLEGV (326 aa)) enclose the SAM-dependent MTase C5-type domain. The active site involves cysteine 73.

It belongs to the class I-like SAM-binding methyltransferase superfamily. C5-methyltransferase family.

The enzyme catalyses a 2'-deoxycytidine in DNA + S-adenosyl-L-methionine = a 5-methyl-2'-deoxycytidine in DNA + S-adenosyl-L-homocysteine + H(+). A methylase that recognizes the double-stranded sequence 5'-GGCC-3', methylates C-3 on both strands, and protects the DNA from cleavage by the MthTI endonuclease. This Methanothermobacter thermautotrophicus (Methanobacterium thermoformicicum) protein is Type II methyltransferase M.MthTI (mthTIM).